The sequence spans 473 residues: MKTLYSLRRFYPVETLFNGTLSLGGRDQETTGFAWWAGNARLINLSGKLLGAHVAHAGLIVFWAGAMNLFEVAHFVPEKPMYEQGLILLPHLATLGWGVGPGGEVIDTFPYFVSGVLHLISSAVLGFGGIYHALIGPETLEESFPFFGYVWKDKNKMTTILGIHLILLGAGAFLLVFKALYFGGVYDTWAPGGGDVRKITNLTLSPSVIFGYLLRSPFGGEGWIVGVDNLEDIIGGHVWLGSICIFGGIWHILTKPFAWARRAFIWSGEAYLSYSQGALSIFGFTACCFVWFNNTAYPSEFYGPTGPEASQAQAFTFLVRDQRLGANIGSAQGPTGLGKYLMRSPTGEIIFGGETMRFWDLRAPWLEPLRGPNGLDLSKLKKDIQPWQERRSAEYMTHAPLGSLNSVGGVATEINAVNYVSPRSWLSTSHFVLGFFFFVGHLWHAGRARAAAAGFEKGIDRDTEPVLSMTPLN.

The propeptide occupies 1-14; that stretch reads MKTLYSLRRFYPVE. At threonine 15 the chain carries N-acetylthreonine. Threonine 15 bears the Phosphothreonine mark. 5 consecutive transmembrane segments (helical) span residues 69–93, 134–155, 178–200, 255–275, and 291–312; these read LFEVAHFVPEKPMYEQGLILLPHLA, LIGPETLEESFPFFGYVWKDKN, KALYFGGVYDTWAPGGGDVRKIT, KPFAWARRAFIWSGEAYLSYS, and WFNNTAYPSEFYGPTGPEASQA. Glutamate 367 lines the [CaMn4O5] cluster pocket. Residues 447-471 form a helical membrane-spanning segment; the sequence is RARAAAAGFEKGIDRDTEPVLSMTP.

Belongs to the PsbB/PsbC family. PsbC subfamily. In terms of assembly, PSII is composed of 1 copy each of membrane proteins PsbA, PsbB, PsbC, PsbD, PsbE, PsbF, PsbH, PsbI, PsbJ, PsbK, PsbL, PsbM, PsbT, PsbX, PsbY, PsbZ, Psb30/Ycf12, at least 3 peripheral proteins of the oxygen-evolving complex and a large number of cofactors. It forms dimeric complexes. Binds multiple chlorophylls and provides some of the ligands for the Ca-4Mn-5O cluster of the oxygen-evolving complex. It may also provide a ligand for a Cl- that is required for oxygen evolution. PSII binds additional chlorophylls, carotenoids and specific lipids. is required as a cofactor.

The protein localises to the plastid. It is found in the chloroplast thylakoid membrane. Functionally, one of the components of the core complex of photosystem II (PSII). It binds chlorophyll and helps catalyze the primary light-induced photochemical processes of PSII. PSII is a light-driven water:plastoquinone oxidoreductase, using light energy to abstract electrons from H(2)O, generating O(2) and a proton gradient subsequently used for ATP formation. The polypeptide is Photosystem II CP43 reaction center protein (Angiopteris evecta (Mule's foot fern)).